A 410-amino-acid chain; its full sequence is 2-oxoglutarate-dependent dioxygenase AOP3 (410 aa).

Residues Gly258–Pro355 form the Fe2OG dioxygenase domain. His278, Asp280, and His335 together coordinate Fe cation. Arg346 contacts 2-oxoglutarate.

This sequence belongs to the iron/ascorbate-dependent oxidoreductase family. The cofactor is Fe(2+).

In terms of biological role, 2-oxoglutarate-dependent dioxygenase involved in glucosinolates biosynthesis. Catalyzes the conversion of methylsulfinylalkyl glucosinolates to hydroxyalkyl glucosinolates. In Arabidopsis thaliana (Mouse-ear cress), this protein is 2-oxoglutarate-dependent dioxygenase AOP3 (AOP3).